Consider the following 596-residue polypeptide: CRISPR-associated DNA-binding protein Cas12m (596 aa).

The segment at 19 to 53 is recognition domain (REC1-N); the sequence is EVLRQQLWLAHNLREDLVSLQLAYDDDLKAIWSSY. Residues 54 to 121 are recognition domain (REC2); the sequence is PDVAQAEDTM…RDAIAVVKDD (68 aa). 2 coiled-coil regions span residues 55–83 and 91–117; these read DVAQAEDTMAAAEADAVALSERVKQARIE and TELTQQLRDAKKRLKDARQARRDAIAV. The interval 122–190 is recognition domain (REC1-C); that stretch reads AAERRKARSD…LRHHRFDGSG (69 aa). The segment at 191–302 is wedge domain (WED); sequence TIAVQLQRQA…RAKLCVTARI (112 aa). Positions 303–313 are linker; it reads GDTEPVTSGPT. Positions 314 to 541 are ruvC-I; sequence VALHLGWRST…RDGVPVTIVA (228 aa). H317 lines the Mg(2+) pocket. Positions 541–577 are target nucleic-acid binding (TNB); it reads AAADFTRTHSRCGHVNPADDRYLSNPVRCDGCGAMYD. The Zn(2+) site is built by H549, C552, C569, and C572. The ruvC-II stretch occupies residues 578–596; that stretch reads QDRSFVTLMLRAATAPSNP. Residue D579 coordinates Mg(2+).

Belongs to the CRISPR-associated DNA-binding protein Cas12m family. As to quaternary structure, binds crRNA and target dsDNA as a monomer. Requires Mg(2+) as cofactor. It depends on Zn(2+) as a cofactor.

CRISPR (clustered regularly interspaced short palindromic repeat), is an adaptive immune system that provides protection against mobile genetic elements (viruses, transposable elements and conjugative plasmids). CRISPR clusters contain sequences complementary to antecedent mobile elements and target invading nucleic acids. CRISPR clusters are transcribed and processed into CRISPR RNA (crRNA). Recognizes a short motif in the CRISPR repeat sequences (the 5' PAM or protospacer adjacent motif, 5'-TTN-3' in this organism) to help distinguish self versus nonself, as targets within the bacterial CRISPR locus do not have PAMs. Upon expression in E.coli as a CRISPR locus inhibits plasmid propagation when targeted to regions essential for plasmid propagation (replication origin and dnaA). The crRNA-Cas12m complex inhibits transcription from target DNA leading to gene silencing. Cas12m-crRNA binds DNA in a PAM-dependent, crRNA-guided fashion. Binds a 17-bp crRNA-ss-target DNA heteroduplex, in a 56 nucleotide crRNA. No dsDNA, ssDNA or RNA nuclease activity is seen for the crRNA-Cas12m complex. Is required to process pre-crRNA to mature crRNA without a tracrRNA. Upon expression in E.coli as a CRISPR region preferentially binds to its associated crRNA. This is CRISPR-associated DNA-binding protein Cas12m from Mycolicibacterium mucogenicum (Mycobacterium mucogenicum).